Reading from the N-terminus, the 1314-residue chain is Phosphoribosylformylglycinamidine synthase (1314 aa).

ATP contacts are provided by residues glycine 307 to aspartate 318 and alanine 674. Residues aspartate 675, glutamate 714, asparagine 718, and aspartate 880 each coordinate Mg(2+). Serine 882 is a binding site for ATP. The Glutamine amidotransferase type-1 domain occupies isoleucine 1063–glycine 1314. Residue cysteine 1156 is the Nucleophile of the active site. Catalysis depends on residues histidine 1279 and glutamate 1281.

In the N-terminal section; belongs to the FGAMS family. Monomer.

It localises to the cytoplasm. The catalysed reaction is N(2)-formyl-N(1)-(5-phospho-beta-D-ribosyl)glycinamide + L-glutamine + ATP + H2O = 2-formamido-N(1)-(5-O-phospho-beta-D-ribosyl)acetamidine + L-glutamate + ADP + phosphate + H(+). It participates in purine metabolism; IMP biosynthesis via de novo pathway; 5-amino-1-(5-phospho-D-ribosyl)imidazole from N(2)-formyl-N(1)-(5-phospho-D-ribosyl)glycinamide: step 1/2. In terms of biological role, phosphoribosylformylglycinamidine synthase involved in the purines biosynthetic pathway. Catalyzes the ATP-dependent conversion of formylglycinamide ribonucleotide (FGAR) and glutamine to yield formylglycinamidine ribonucleotide (FGAM) and glutamate. This chain is Phosphoribosylformylglycinamidine synthase, found in Neisseria gonorrhoeae (strain ATCC 700825 / FA 1090).